The primary structure comprises 347 residues: Glycerol-1-phosphate dehydrogenase [NAD(P)+] (347 aa).

NAD(+) contacts are provided by residues 90 to 94 (GRPVD) and 112 to 115 (TAIS). Aspartate 117 is a substrate binding site. Serine 121 is a binding site for NAD(+). Substrate is bound at residue aspartate 165. Residues aspartate 165 and histidine 245 each coordinate Zn(2+). Substrate is bound at residue histidine 249. Position 262 (histidine 262) interacts with Zn(2+).

This sequence belongs to the glycerol-1-phosphate dehydrogenase family. In terms of assembly, homodimer. The cofactor is Zn(2+).

It localises to the cytoplasm. It catalyses the reaction sn-glycerol 1-phosphate + NAD(+) = dihydroxyacetone phosphate + NADH + H(+). The enzyme catalyses sn-glycerol 1-phosphate + NADP(+) = dihydroxyacetone phosphate + NADPH + H(+). It functions in the pathway membrane lipid metabolism; glycerophospholipid metabolism. Functionally, catalyzes the NAD(P)H-dependent reduction of dihydroxyacetonephosphate (DHAP or glycerone phosphate) to glycerol 1-phosphate (G1P). The G1P thus generated is used as the glycerophosphate backbone of phospholipids in the cellular membranes of Archaea. In Thermofilum pendens (strain DSM 2475 / Hrk 5), this protein is Glycerol-1-phosphate dehydrogenase [NAD(P)+].